A 339-amino-acid polypeptide reads, in one-letter code: Glycerol-3-phosphate dehydrogenase [NAD(P)+] (339 aa).

Residues Ser15, Tyr16, His36, and Lys110 each coordinate NADPH. Sn-glycerol 3-phosphate contacts are provided by Lys110, Gly139, and Thr141. Ala143 contributes to the NADPH binding site. The sn-glycerol 3-phosphate site is built by Lys195, Asp248, Ser258, Arg259, and Asn260. The Proton acceptor role is filled by Lys195. Arg259 serves as a coordination point for NADPH. Positions 283 and 285 each coordinate NADPH.

The protein belongs to the NAD-dependent glycerol-3-phosphate dehydrogenase family.

Its subcellular location is the cytoplasm. The catalysed reaction is sn-glycerol 3-phosphate + NAD(+) = dihydroxyacetone phosphate + NADH + H(+). It catalyses the reaction sn-glycerol 3-phosphate + NADP(+) = dihydroxyacetone phosphate + NADPH + H(+). It participates in membrane lipid metabolism; glycerophospholipid metabolism. In terms of biological role, catalyzes the reduction of the glycolytic intermediate dihydroxyacetone phosphate (DHAP) to sn-glycerol 3-phosphate (G3P), the key precursor for phospholipid synthesis. The polypeptide is Glycerol-3-phosphate dehydrogenase [NAD(P)+] (Escherichia coli O17:K52:H18 (strain UMN026 / ExPEC)).